The chain runs to 112 residues: MHVLYSTSAHILPSGRHINVARTPWLRLDIVSIIGILLHSGPIAGFSINMIIFRDAFIPLTKVIENKKMNNIISYSYIYIYIYICHITVENPGDITDKHYTRMNVSHYYIIT.

2 helical membrane-spanning segments follow: residues 33 to 53 (IIGI…MIIF) and 69 to 89 (MNNI…HITV).

The protein resides in the membrane. This is an uncharacterized protein from Saccharomyces cerevisiae (strain ATCC 204508 / S288c) (Baker's yeast).